An 888-amino-acid chain; its full sequence is Glutamate receptor 3 (888 aa).

The N-terminal stretch at 1 to 22 (MGQSVLRAVFFLVLGLLGHSHG) is a signal peptide. The Extracellular portion of the chain corresponds to 23-546 (GFPNTISIGG…GVFSFLDPLA (524 aa)). Residues N57, N260, N374, N409, and N416 are each glycosylated (N-linked (GlcNAc...) asparagine). A disulfide bridge links C85 with C334. L-glutamate contacts are provided by P502, T504, and R509. A helical transmembrane segment spans residues 547–567 (YEIWMCIVFAYIGVSVVLFLV). The Cytoplasmic portion of the chain corresponds to 568 to 596 (SRFSPYEWHLEDNNEEPRDPQSPPDPPNE). Positions 597-612 (FGIFNSLWFSLGAFMQ) form an intramembrane region, helical; Pore-forming. An intramembrane segment occupies 613-615 (QGC). C615 carries the S-palmitoyl cysteine lipid modification. Residues 616 to 621 (DISPRS) lie on the Cytoplasmic side of the membrane. Residues 622-642 (LSGRIVGGVWWFFTLIIISSY) form a helical membrane-spanning segment. The Extracellular portion of the chain corresponds to 643–817 (TANLAAFLTV…DKTSALSLSN (175 aa)). 3 residues coordinate L-glutamate: S680, T681, and E731. A disulfide bond links C744 and C799. Residues 818-838 (VAGVFYILVGGLGLAMMVALI) traverse the membrane as a helical segment. At 839–888 (EFCYKSRAESKRMKLTKNTQNFKPAPATNTQNYATYREGYNVYGTESVKI) the chain is on the cytoplasmic side. C841 carries S-palmitoyl cysteine lipidation. Phosphotyrosine is present on residues Y871 and Y881.

This sequence belongs to the glutamate-gated ion channel (TC 1.A.10.1) family. GRIA3 subfamily. As to quaternary structure, homotetramer or heterotetramer of pore-forming glutamate receptor subunits. Tetramers may be formed by the dimerization of dimers. Interacts with PICK1, GRIP1 and GRIP2. Found in a complex with GRIA1, GRIA2, GRIA4, CNIH2, CNIH3, CACNG2, CACNG3, CACNG4, CACNG5, CACNG7 and CACNG8. Interacts with CACNG5. Found in a complex with GRIA1, GRIA2, GRIA4, DLG4, CACNG8 and CNIH2.

It is found in the cell membrane. The protein localises to the postsynaptic cell membrane. Its subcellular location is the postsynaptic density membrane. The catalysed reaction is Ca(2+)(in) = Ca(2+)(out). Functionally, ionotropic glutamate receptor that functions as a ligand-gated cation channel, gated by L-glutamate and glutamatergic agonists such as alpha-amino-3-hydroxy-5-methyl-4-isoxazolepropionic acid (AMPA), quisqualic acid, and kainic acid. L-glutamate acts as an excitatory neurotransmitter at many synapses in the central nervous system and plays an important role in fast excitatory synaptic transmission by inducing long-term potentiation. Binding of the excitatory neurotransmitter L-glutamate induces a conformation change, leading to the opening of the cation channel, and thereby converts the chemical signal to an electrical impulse upon entry of calcium. The receptor then desensitizes rapidly and enters a transient inactive state, characterized by the presence of bound agonist. In the presence of CACNG8, shows resensitization which is characterized by a delayed accumulation of current flux upon continued application of glutamate. This chain is Glutamate receptor 3, found in Rattus norvegicus (Rat).